Reading from the N-terminus, the 1382-residue chain is Hepatocyte growth factor receptor (1382 aa).

An N-terminal signal peptide occupies residues 1–24 (MKASAVLAPGILVILFTLVQKSNC). Over 25 to 933 (ECKEALVKSK…VIVQPDQNIT (909 aa)) the chain is Extracellular. Residues 27 to 516 (KEALVKSKMN…TGKKITKIPL (490 aa)) enclose the Sema domain. N45 is a glycosylation site (N-linked (GlcNAc...) asparagine). 4 disulfides stabilise this stretch: C95/C101, C98/C160, C133/C141, and C173/C176. A glycan (N-linked (GlcNAc...) asparagine) is linked at N106. N-linked (GlcNAc...) asparagine glycosylation is found at N203 and N359. 2 disulfides stabilise this stretch: C299/C364 and C386/C398. N400 and N406 each carry an N-linked (GlcNAc...) asparagine glycan. Intrachain disulfides connect C521-C539, C527-C562, C530-C546, and C542-C552. IPT/TIG domains lie at 564–656 (PTIY…FSYV), 658–740 (PIIT…FSYQ), and 743–837 (PIIY…LIYV). O-linked (Man) threonine glycosylation occurs at T583. Residues N608 and N636 are each glycosylated (N-linked (GlcNAc...) asparagine). T677 and T762 each carry an O-linked (Man) threonine glycan. Residues N786, N880, and N931 are each glycosylated (N-linked (GlcNAc...) asparagine). The chain crosses the membrane as a helical span at residues 934–956 (EFIVGILSISGILLTLLGLLLWW). The Cytoplasmic portion of the chain corresponds to 957-1382 (KKKKQIKDLG…QDNFDSEGNT (426 aa)). At S967 the chain carries Phosphoserine. T978 bears the Phosphothreonine mark. Phosphoserine is present on residues S991, S998, and S1001. Y1004 is subject to Phosphotyrosine. Positions 1079–1346 (VHFNEVIGRG…RISAIFSTFI (268 aa)) constitute a Protein kinase domain. ATP is bound by residues 1085–1093 (IGRGHFGCV) and K1111. Residue D1205 is the Proton acceptor of the active site. The tract at residues 1213–1382 (LDENFTVKVA…QDNFDSEGNT (170 aa)) is interaction with RANBP9. The residue at position 1231 (Y1231) is a Phosphotyrosine. Residues Y1235 and Y1236 each carry the phosphotyrosine; by autocatalysis modification. The residue at position 1290 (T1290) is a Phosphothreonine. The segment at 1321–1360 (WHPKAELRPSFSELVSRISAIFSTFIGEHYVHVNATYVNI) is interaction with MUC20. Phosphotyrosine; by autocatalysis is present on residues Y1350 and Y1357. Residue Y1366 is modified to Phosphotyrosine.

The protein belongs to the protein kinase superfamily. Tyr protein kinase family. Heterodimer made of an alpha chain (50 kDa) and a beta chain (145 kDa) which are disulfide linked. Binds PLXNB1. Interacts when phosphorylated with downstream effectors including STAT3, PIK3R1, SRC, PCLG1, GRB2 and GAB1. Interacts with SPSB1, SPSB2 and SPSB4. Interacts with INPP5D/SHIP1. When phosphorylated at Tyr-1357, interacts with INPPL1/SHIP2. Interacts with RANBP9 and RANBP10, as well as SPSB1, SPSB2, SPSB3 and SPSB4. SPSB1 binding occurs in the presence and in the absence of HGF, however HGF treatment has a positive effect on this interaction. Interacts with MUC20; prevents interaction with GRB2 and suppresses hepatocyte growth factor-induced cell proliferation. Interacts with GRB10. Interacts with PTPN1 and PTPN2. Interacts with tensin TNS3. Interacts (when phosphorylated) with tensin TNS4 (via SH2 domain); the interaction increases MET protein stability by inhibiting MET endocytosis and subsequent lysosomal degradation. Autophosphorylated in response to ligand binding on Tyr-1235 and Tyr-1236 in the kinase domain leading to further phosphorylation of Tyr-1350 and Tyr-1357 in the C-terminal multifunctional docking site. Dephosphorylated by PTPRJ at Tyr-1350 and Tyr-1366. Dephosphorylated by PTPN1 and PTPN2. In terms of processing, ubiquitinated. Ubiquitination by CBL regulates the receptor stability and activity through proteasomal degradation. Post-translationally, O-mannosylation of IPT/TIG domains by TMEM260 is required for protein maturation. O-mannosylated residues are composed of single mannose glycans that are not elongated or modified.

It is found in the membrane. The catalysed reaction is L-tyrosyl-[protein] + ATP = O-phospho-L-tyrosyl-[protein] + ADP + H(+). With respect to regulation, in its inactive state, the C-terminal tail interacts with the catalytic domain and inhibits the kinase activity. Upon ligand binding, the C-terminal tail is displaced and becomes phosphorylated, thus increasing the kinase activity. Functionally, receptor tyrosine kinase that transduces signals from the extracellular matrix into the cytoplasm by binding to hepatocyte growth factor/HGF ligand. Regulates many physiological processes including proliferation, scattering, morphogenesis and survival. Ligand binding at the cell surface induces autophosphorylation of MET on its intracellular domain that provides docking sites for downstream signaling molecules. Following activation by ligand, interacts with the PI3-kinase subunit PIK3R1, PLCG1, SRC, GRB2, STAT3 or the adapter GAB1. Recruitment of these downstream effectors by MET leads to the activation of several signaling cascades including the RAS-ERK, PI3 kinase-AKT, or PLCgamma-PKC. The RAS-ERK activation is associated with the morphogenetic effects while PI3K/AKT coordinates prosurvival effects. During embryonic development, MET signaling plays a role in gastrulation, development and migration of muscles and neuronal precursors, angiogenesis and kidney formation. In adults, participates in wound healing as well as organ regeneration and tissue remodeling. Also promotes differentiation and proliferation of hematopoietic cells. The chain is Hepatocyte growth factor receptor (MET) from Atelerix albiventris (Middle-African hedgehog).